Consider the following 492-residue polypeptide: Catalase (492 aa).

Residues His65 and Asn138 contribute to the active site. Residue Tyr348 coordinates heme.

It belongs to the catalase family. In terms of assembly, homotetramer. Requires heme as cofactor.

The protein localises to the cytoplasm. The protein resides in the cytosol. It is found in the peroxisome matrix. It carries out the reaction 2 H2O2 = O2 + 2 H2O. Catalyzes the degradation of hydrogen peroxide (H(2)O(2)) generated by peroxisomal oxidases to water and oxygen, thereby protecting cells from the toxic effects of hydrogen peroxide. In Triticum aestivum (Wheat), this protein is Catalase (CATA).